The following is a 374-amino-acid chain: Probable tuliposide A-converting enzyme b6, amyloplastic (374 aa).

The transit peptide at 1–68 (MSVALFCGPP…TNSSLSPSPT (68 aa)) directs the protein to the amyloplast. Ser226 (acyl-ester intermediate) is an active-site residue. Active-site charge relay system residues include Asp316 and His348.

The protein belongs to the AB hydrolase superfamily. In terms of assembly, homodimer.

The protein localises to the plastid. Its subcellular location is the amyloplast. The catalysed reaction is 6-tuliposide A = tulipalin A + D-glucose. In terms of biological role, lactone-forming carboxylesterases, specifically catalyzing intramolecular transesterification, but not hydrolysis. Involved in the biosynthesis of tulipalins, defensive chemicals that show antimicrobial activities against a broad range of strains of bacteria and fungi. Substrates are 6-tuliposide A &gt; 6-tuliposide B. This chain is Probable tuliposide A-converting enzyme b6, amyloplastic (TCEA-B6), found in Tulipa gesneriana (Garden tulip).